A 486-amino-acid chain; its full sequence is Serine/threonine-protein kinase 33 (486 aa).

The disordered stretch occupies residues 39–100; sequence VVEMSQTSST…WGRGNFTEGK (62 aa). Residues 41 to 53 are compositionally biased toward polar residues; sequence EMSQTSSTGSSEF. The segment covering 57 to 66 has biased composition (basic and acidic residues); that stretch reads PEKRKEKGAS. Residues 68 to 80 show a composition bias toward polar residues; sequence DVTSGKDSPSKSS. The Protein kinase domain occupies 116 to 381; it reads YTFGRILGQG…AKELLDNQWL (266 aa). Residues 122–130 and Lys145 contribute to the ATP site; that span reads LGQGSFGMV. The Proton acceptor role is filled by Asp238. The tract at residues 402–451 is disordered; the sequence is KNNPESDEESTTDQRDSRSGQEESKVYQPSRNVPDVSNSSDEEEGKQVGR. Residue Ser407 is modified to Phosphoserine. Basic and acidic residues predominate over residues 413-426; sequence TDQRDSRSGQEESK. Over residues 428 to 440 the composition is skewed to polar residues; it reads YQPSRNVPDVSNS.

It belongs to the protein kinase superfamily. CAMK Ser/Thr protein kinase family. CaMK subfamily. In terms of assembly, interacts with vimentin/VIM. Post-translationally, autophosphorylated.

Its subcellular location is the cytoplasm. The protein localises to the perinuclear region. It catalyses the reaction L-seryl-[protein] + ATP = O-phospho-L-seryl-[protein] + ADP + H(+). The catalysed reaction is L-threonyl-[protein] + ATP = O-phospho-L-threonyl-[protein] + ADP + H(+). Serine/threonine protein kinase which phosphorylates vimentin/VIM. Therefore may play a specific role in the dynamic behavior of the intermediate filament cytoskeleton. The protein is Serine/threonine-protein kinase 33 (STK33) of Bos taurus (Bovine).